A 437-amino-acid chain; its full sequence is GTPase Der (437 aa).

2 EngA-type G domains span residues 3–168 (PLIA…PCPE) and 178–353 (IKLA…LNRR). GTP is bound by residues 9–16 (GRPNVGKS), 56–60 (DTGGY), 120–123 (NKVD), 184–191 (GRPNVGKS), 231–235 (DTAGL), and 296–299 (NKWD). In terms of domain architecture, KH-like spans 354–437 (QKISTSNLNR…IPITMRFLRK (84 aa)).

The protein belongs to the TRAFAC class TrmE-Era-EngA-EngB-Septin-like GTPase superfamily. EngA (Der) GTPase family. Associates with the 50S ribosomal subunit.

GTPase that plays an essential role in the late steps of ribosome biogenesis. The polypeptide is GTPase Der (Chlorobaculum tepidum (strain ATCC 49652 / DSM 12025 / NBRC 103806 / TLS) (Chlorobium tepidum)).